Consider the following 205-residue polypeptide: Guanylate kinase (205 aa).

The Guanylate kinase-like domain maps to 7 to 185 (GNIFIISAAS…AEEDLRHIVN (179 aa)). Residue 14–21 (AASGTGKT) participates in ATP binding.

It belongs to the guanylate kinase family.

Its subcellular location is the cytoplasm. It carries out the reaction GMP + ATP = GDP + ADP. Essential for recycling GMP and indirectly, cGMP. The protein is Guanylate kinase (gmk) of Neisseria meningitidis serogroup B (strain ATCC BAA-335 / MC58).